The following is a 69-amino-acid chain: Large ribosomal subunit protein uL29 (69 aa).

This sequence belongs to the universal ribosomal protein uL29 family.

This Rhodospirillum centenum (strain ATCC 51521 / SW) protein is Large ribosomal subunit protein uL29.